The sequence spans 222 residues: DnaJ homolog subfamily B member 9 (222 aa).

Residues 1–23 (MATPQSVFVFAICILMITELILA) form the signal peptide. Positions 26–90 (NYYDILGVPK…NRRKEYDIIG (65 aa)) constitute a J domain. The tract at residues 91 to 222 (HSAFTNGKGQ…VTTYTDCSGQ (132 aa)) is divergent targeting domain. Phosphoserine is present on S133.

As to quaternary structure, interacts with HSPA5/BiP; interaction is direct. Interacts with ERN1/IRE1 (via the luminal region). Interacts with DERL1.

The protein localises to the endoplasmic reticulum lumen. Its function is as follows. Co-chaperone for Hsp70 protein HSPA5/BiP that acts as a key repressor of the ERN1/IRE1-mediated unfolded protein response (UPR). J domain-containing co-chaperones stimulate the ATPase activity of Hsp70 proteins and are required for efficient substrate recognition by Hsp70 proteins. In the unstressed endoplasmic reticulum, interacts with the luminal region of ERN1/IRE1 and selectively recruits HSPA5/BiP: HSPA5/BiP disrupts the dimerization of the active ERN1/IRE1 luminal region, thereby inactivating ERN1/IRE1. Also involved in endoplasmic reticulum-associated degradation (ERAD) of misfolded proteins. Required for survival of B-cell progenitors and normal antibody production. The sequence is that of DnaJ homolog subfamily B member 9 from Rattus norvegicus (Rat).